Consider the following 156-residue polypeptide: Transcriptional repressor NrdR (156 aa).

Residues 3-34 (CPKCSSTHSRVVDSRHADDANAIRRRRECENC) fold into a zinc finger. The ATP-cone domain maps to 49–139 (LIVVKKDGTR…VYKEFKDVDQ (91 aa)).

This sequence belongs to the NrdR family. It depends on Zn(2+) as a cofactor.

Functionally, negatively regulates transcription of bacterial ribonucleotide reductase nrd genes and operons by binding to NrdR-boxes. The polypeptide is Transcriptional repressor NrdR (Staphylococcus haemolyticus (strain JCSC1435)).